A 420-amino-acid polypeptide reads, in one-letter code: UDP-N-acetylglucosamine 1-carboxyvinyltransferase (420 aa).

Position 22–23 (22–23 (KN)) interacts with phosphoenolpyruvate. Position 92 (Arg-92) interacts with UDP-N-acetyl-alpha-D-glucosamine. The active-site Proton donor is the Cys-116. Cys-116 bears the 2-(S-cysteinyl)pyruvic acid O-phosphothioketal mark. UDP-N-acetyl-alpha-D-glucosamine-binding positions include 121-125 (RPVDQ), Asp-304, and Ile-326.

It belongs to the EPSP synthase family. MurA subfamily.

The protein localises to the cytoplasm. It carries out the reaction phosphoenolpyruvate + UDP-N-acetyl-alpha-D-glucosamine = UDP-N-acetyl-3-O-(1-carboxyvinyl)-alpha-D-glucosamine + phosphate. Its pathway is cell wall biogenesis; peptidoglycan biosynthesis. In terms of biological role, cell wall formation. Adds enolpyruvyl to UDP-N-acetylglucosamine. This chain is UDP-N-acetylglucosamine 1-carboxyvinyltransferase, found in Paraburkholderia xenovorans (strain LB400).